We begin with the raw amino-acid sequence, 201 residues long: E3 ubiquitin-protein ligase LAP (201 aa).

Residues 1–92 (MSTIVDMVDV…RDCHDSLLVN (92 aa)) lie on the Cytoplasmic side of the membrane. An RING-CH-type zinc finger spans residues 9–69 (DVSLVDKCCW…AICETPYNVK (61 aa)). 8 residues coordinate Zn(2+): cysteine 17, cysteine 20, cysteine 31, cysteine 33, histidine 41, cysteine 44, cysteine 59, and cysteine 62. A helical membrane pass occupies residues 93–113 (LPLCLIVGGISTYTLVSVEII). The Lumenal portion of the chain corresponds to 114-123 (KLMESEETSE). The helical transmembrane segment at 124-144 (LTKVFLVTSFLGPFIVTVLSA) threads the bilayer. Over 145–201 (LRTCIDCRTYFLTTRKRNTIHTLQELEDDDDDDDDDDDDDDEEYADAVEEIIIGPSN) the chain is Cytoplasmic. Positions 168–188 (QELEDDDDDDDDDDDDDDEEY) are disordered. A compositionally biased stretch (acidic residues) spans 169-188 (ELEDDDDDDDDDDDDDDEEY).

It belongs to the poxviridae LAP protein family.

The protein resides in the host membrane. It localises to the host Golgi apparatus. It is found in the host trans-Golgi network membrane. The protein localises to the host early endosome membrane. It carries out the reaction S-ubiquitinyl-[E2 ubiquitin-conjugating enzyme]-L-cysteine + [acceptor protein]-L-lysine = [E2 ubiquitin-conjugating enzyme]-L-cysteine + N(6)-ubiquitinyl-[acceptor protein]-L-lysine.. E3 ubiquitin-protein ligase which promotes ubiquitination and subsequent degradation of host MHC-I and CD4 molecules, presumably to prevent lysis of infected cells by cytotoxic T-lymphocytes and NK cell. Binds target molecules through transmembrane interaction. The result of this ubiquitination is the enhancement of the endocytosis of the target chain and the delivery to the lysosome, where it is proteolytically destroyed. This Oryctolagus cuniculus (Rabbit) protein is E3 ubiquitin-protein ligase LAP.